Consider the following 1937-residue polypeptide: Myosin-8 (1937 aa).

The 50-residue stretch at 35 to 84 (DAKTSVFVAEPKESYVKSVIQSKDGGKVTVKTESGATLTVKEDQVFPMNP) folds into the Myosin N-terminal SH3-like domain. Phosphothreonine occurs at positions 66 and 71. The region spanning 88-781 (DKIEDMAMMT…LLGLLEEMRD (694 aa)) is the Myosin motor domain. An N6,N6,N6-trimethyllysine modification is found at Lys-132. Residue 181 to 188 (GESGAGKT) participates in ATP binding. Tyr-389 is modified (phosphotyrosine). Phosphothreonine is present on Thr-419. Residue Tyr-424 is modified to Phosphotyrosine. Ser-625 is subject to Phosphoserine. The actin-binding stretch occupies residues 658–680 (LNKLMTNLRSTHPHFVRCIIPNE). Residue His-756 is modified to Pros-methylhistidine. The tract at residues 760-774 (KFGHTKVFFKAGLLG) is actin-binding. In terms of domain architecture, IQ spans 781-813 (DEKLAQIITRTQAVCRGYLMRVEYQKMLLRRES). The stretch at 842-1937 (LLKSAETEKE…REVHTKISAE (1096 aa)) forms a coiled coil. Phosphoserine occurs at positions 1091 and 1095. A disordered region spans residues 1125–1171 (IEAERASRAKAEKQRSDLSRELEEISERLEEAGGATSAQVEMNKKRE). Over residues 1127–1155 (AERASRAKAEKQRSDLSRELEEISERLEE) the composition is skewed to basic and acidic residues. A phosphoserine mark is found at Ser-1161 and Ser-1236. Thr-1254 bears the Phosphothreonine mark. Ser-1260 carries the phosphoserine modification. Thr-1285 is modified (phosphothreonine). 3 positions are modified to phosphoserine: Ser-1291, Ser-1302, and Ser-1305. Tyr-1463 carries the post-translational modification Phosphotyrosine. Thr-1466 carries the phosphothreonine modification. Position 1491 is a phosphotyrosine (Tyr-1491). Phosphoserine is present on Ser-1494. The residue at position 1500 (Thr-1500) is a Phosphothreonine. Ser-1513 is subject to Phosphoserine. The residue at position 1516 (Thr-1516) is a Phosphothreonine. A phosphoserine mark is found at Ser-1553, Ser-1573, Ser-1602, Ser-1713, and Ser-1725. Thr-1729 is modified (phosphothreonine). Ser-1738 carries the phosphoserine modification.

The protein belongs to the TRAFAC class myosin-kinesin ATPase superfamily. Myosin family. In terms of assembly, muscle myosin is a hexameric protein that consists of 2 heavy chain subunits (MHC), 2 alkali light chain subunits (MLC) and 2 regulatory light chain subunits (MLC-2).

It localises to the cytoplasm. The protein localises to the myofibril. In terms of biological role, muscle contraction. The polypeptide is Myosin-8 (Myh8) (Mus musculus (Mouse)).